A 211-amino-acid chain; its full sequence is Cytochrome c biogenesis ATP-binding export protein CcmA (211 aa).

The region spanning 6 to 211 (LQTVALACER…RDIDLGNWAV (206 aa)) is the ABC transporter domain. 38-45 (GPNGSGKT) contributes to the ATP binding site.

Belongs to the ABC transporter superfamily. CcmA exporter (TC 3.A.1.107) family. As to quaternary structure, the complex is composed of two ATP-binding proteins (CcmA) and two transmembrane proteins (CcmB).

The protein resides in the cell inner membrane. The catalysed reaction is heme b(in) + ATP + H2O = heme b(out) + ADP + phosphate + H(+). In terms of biological role, part of the ABC transporter complex CcmAB involved in the biogenesis of c-type cytochromes; once thought to export heme, this seems not to be the case, but its exact role is uncertain. Responsible for energy coupling to the transport system. This chain is Cytochrome c biogenesis ATP-binding export protein CcmA, found in Pseudomonas fluorescens (strain Pf0-1).